The sequence spans 209 residues: Kynurenine formamidase (209 aa).

Substrate is bound at residue Phe18. Positions 48, 52, and 54 each coordinate Zn(2+). The active-site Proton donor/acceptor is the His58. His160 and Glu172 together coordinate Zn(2+).

The protein belongs to the Cyclase 1 superfamily. KynB family. As to quaternary structure, homodimer. The cofactor is Zn(2+).

It catalyses the reaction N-formyl-L-kynurenine + H2O = L-kynurenine + formate + H(+). Its pathway is amino-acid degradation; L-tryptophan degradation via kynurenine pathway; L-kynurenine from L-tryptophan: step 2/2. In terms of biological role, catalyzes the hydrolysis of N-formyl-L-kynurenine to L-kynurenine, the second step in the kynurenine pathway of tryptophan degradation. This Bordetella avium (strain 197N) protein is Kynurenine formamidase.